The chain runs to 361 residues: 3-dehydroquinate synthase (361 aa).

NAD(+)-binding positions include 72–77 (SGEKEK), 130–131 (TT), Lys142, and Lys151. Zn(2+)-binding residues include Glu184, His247, and His264.

Belongs to the sugar phosphate cyclases superfamily. Dehydroquinate synthase family. Co(2+) serves as cofactor. The cofactor is Zn(2+). Requires NAD(+) as cofactor.

It localises to the cytoplasm. It carries out the reaction 7-phospho-2-dehydro-3-deoxy-D-arabino-heptonate = 3-dehydroquinate + phosphate. It participates in metabolic intermediate biosynthesis; chorismate biosynthesis; chorismate from D-erythrose 4-phosphate and phosphoenolpyruvate: step 2/7. Catalyzes the conversion of 3-deoxy-D-arabino-heptulosonate 7-phosphate (DAHP) to dehydroquinate (DHQ). The sequence is that of 3-dehydroquinate synthase from Bacillus cereus (strain B4264).